A 484-amino-acid chain; its full sequence is ATP synthase subunit beta (484 aa).

169 to 176 (GGAGVGKT) serves as a coordination point for ATP.

Belongs to the ATPase alpha/beta chains family. As to quaternary structure, F-type ATPases have 2 components, CF(1) - the catalytic core - and CF(0) - the membrane proton channel. CF(1) has five subunits: alpha(3), beta(3), gamma(1), delta(1), epsilon(1). CF(0) has three main subunits: a(1), b(2) and c(9-12). The alpha and beta chains form an alternating ring which encloses part of the gamma chain. CF(1) is attached to CF(0) by a central stalk formed by the gamma and epsilon chains, while a peripheral stalk is formed by the delta and b chains.

It is found in the cell membrane. It carries out the reaction ATP + H2O + 4 H(+)(in) = ADP + phosphate + 5 H(+)(out). Its function is as follows. Produces ATP from ADP in the presence of a proton gradient across the membrane. The catalytic sites are hosted primarily by the beta subunits. This is ATP synthase subunit beta from Nocardioides sp. (strain ATCC BAA-499 / JS614).